Reading from the N-terminus, the 342-residue chain is N-acetyl-gamma-glutamyl-phosphate reductase (342 aa).

Cys149 is a catalytic residue.

This sequence belongs to the NAGSA dehydrogenase family. Type 1 subfamily.

The protein localises to the cytoplasm. It catalyses the reaction N-acetyl-L-glutamate 5-semialdehyde + phosphate + NADP(+) = N-acetyl-L-glutamyl 5-phosphate + NADPH + H(+). It functions in the pathway amino-acid biosynthesis; L-arginine biosynthesis; N(2)-acetyl-L-ornithine from L-glutamate: step 3/4. Functionally, catalyzes the NADPH-dependent reduction of N-acetyl-5-glutamyl phosphate to yield N-acetyl-L-glutamate 5-semialdehyde. This is N-acetyl-gamma-glutamyl-phosphate reductase from Rhodobacter capsulatus (strain ATCC BAA-309 / NBRC 16581 / SB1003).